A 248-amino-acid chain; its full sequence is 2,3-bisphosphoglycerate-dependent phosphoglycerate mutase (248 aa).

Substrate-binding positions include R7–N14, T20–G21, R59, E86–Y89, K97, R113–R114, and G182–N183. H8 serves as the catalytic Tele-phosphohistidine intermediate. The active-site Proton donor/acceptor is the E86.

Belongs to the phosphoglycerate mutase family. BPG-dependent PGAM subfamily.

It carries out the reaction (2R)-2-phosphoglycerate = (2R)-3-phosphoglycerate. Its pathway is carbohydrate degradation; glycolysis; pyruvate from D-glyceraldehyde 3-phosphate: step 3/5. In terms of biological role, catalyzes the interconversion of 2-phosphoglycerate and 3-phosphoglycerate. The sequence is that of 2,3-bisphosphoglycerate-dependent phosphoglycerate mutase from Methylacidiphilum infernorum (isolate V4) (Methylokorus infernorum (strain V4)).